A 31-amino-acid polypeptide reads, in one-letter code: U6-ctenitoxin-Co1a (31 aa).

Disulfide bonds link Cys-2/Cys-18 and Cys-9/Cys-23.

In terms of tissue distribution, expressed by the venom gland.

The protein resides in the secreted. Functionally, antagonist of L-type calcium channels (Cav1/CACNA1). This chain is U6-ctenitoxin-Co1a, found in Ctenus ornatus (Brazilian spider).